The following is a 167-amino-acid chain: Leptin (167 aa).

The signal sequence occupies residues 1–21 (MHCVPLFCFLWFCHHLYYSQA). Residues Cys-117 and Cys-167 are joined by a disulfide bond.

This sequence belongs to the leptin family.

Its subcellular location is the secreted. Its function is as follows. Key player in the regulation of energy balance and body weight control. Once released into the circulation, has central and peripheral effects by binding LEPR, found in many tissues, which results in the activation of several major signaling pathways. In the hypothalamus, acts as an appetite-regulating factor that induces a decrease in food intake and an increase in energy consumption by inducing anorexinogenic factors and suppressing orexigenic neuropeptides, also regulates bone mass and secretion of hypothalamo-pituitary-adrenal hormones. In the periphery, increases basal metabolism, influences reproductive function, regulates pancreatic beta-cell function and insulin secretion, is pro-angiogenic for endothelial cell and affects innate and adaptive immunity. In the arcuate nucleus of the hypothalamus, activates by depolarization POMC neurons inducing FOS and SOCS3 expression to release anorexigenic peptides and inhibits by hyperpolarization NPY neurons inducing SOCS3 with a consequent reduction on release of orexigenic peptides. In addition to its known satiety inducing effect, has a modulatory role in nutrient absorption. In the intestine, reduces glucose absorption by enterocytes by activating PKC and leading to a sequential activation of p38, PI3K and ERK signaling pathways which exerts an inhibitory effect on glucose absorption. Acts as a growth factor on certain tissues, through the activation of different signaling pathways increases expression of genes involved in cell cycle regulation such as CCND1, via JAK2-STAT3 pathway, or VEGFA, via MAPK1/3 and PI3K-AKT1 pathways. May also play an apoptotic role via JAK2-STAT3 pathway and up-regulation of BIRC5 expression. Pro-angiogenic, has mitogenic activity on vascular endothelial cells and plays a role in matrix remodeling by regulating the expression of matrix metalloproteinases (MMPs) and tissue inhibitors of metalloproteinases (TIMPs). In innate immunity, modulates the activity and function of neutrophils by increasing chemotaxis and the secretion of oxygen radicals. Increases phagocytosis by macrophages and enhances secretion of pro-inflammatory mediators. Increases cytotoxic ability of NK cells. Plays a pro-inflammatory role, in synergy with IL1B, by inducing NOS2 which promotes the production of IL6, IL8 and Prostaglandin E2, through a signaling pathway that involves JAK2, PI3K, MAP2K1/MEK1 and MAPK14/p38. In adaptive immunity, promotes the switch of memory T-cells towards T helper-1 cell immune responses. Increases CD4(+)CD25(-) T-cell proliferation and reduces autophagy during TCR (T-cell receptor) stimulation, through MTOR signaling pathway activation and BCL2 up-regulation. The sequence is that of Leptin (LEP) from Sminthopsis crassicaudata (Fat-tailed dunnart).